The chain runs to 272 residues: NH(3)-dependent NAD(+) synthetase (272 aa).

ATP is bound at residue 43 to 50 (GLSGGQDS). Asp-49 is a binding site for Mg(2+). Deamido-NAD(+) is bound at residue Arg-138. ATP is bound at residue Thr-158. Residue Glu-163 coordinates Mg(2+). 2 residues coordinate deamido-NAD(+): Lys-171 and Asp-178. Residues Lys-187 and Thr-209 each contribute to the ATP site. 258–259 (HK) is a deamido-NAD(+) binding site.

It belongs to the NAD synthetase family. In terms of assembly, homodimer.

The catalysed reaction is deamido-NAD(+) + NH4(+) + ATP = AMP + diphosphate + NAD(+) + H(+). It participates in cofactor biosynthesis; NAD(+) biosynthesis; NAD(+) from deamido-NAD(+) (ammonia route): step 1/1. Functionally, catalyzes the ATP-dependent amidation of deamido-NAD to form NAD. Uses ammonia as a nitrogen source. The sequence is that of NH(3)-dependent NAD(+) synthetase from Halalkalibacterium halodurans (strain ATCC BAA-125 / DSM 18197 / FERM 7344 / JCM 9153 / C-125) (Bacillus halodurans).